The following is a 434-amino-acid chain: Zinc finger protein Pegasus (434 aa).

Residues 33–57 form a disordered region; sequence VSSDKEAETLQGAGTDSDQNGLDHP. 3 C2H2-type zinc fingers span residues 82-104, 110-132, and 138-161; these read LKCR…IRIH, HRCH…MRSH, and YKCE…RRKH. Over residues 260–274 the composition is skewed to polar residues; the sequence is GQLSSLPPDTQNPAS. Positions 260–357 are disordered; that stretch reads GQLSSLPPDT…PSTPAPALPA (98 aa). Residues 296 to 313 are compositionally biased toward low complexity; the sequence is CASAVSTSVAQSSSPASP. The segment covering 337–349 has biased composition (polar residues); the sequence is RTSTPSISNSQPS. 2 consecutive C2H2-type zinc fingers follow at residues 364-386 and 392-419; these read HHCQ…MGCH and FQCN…CCQH.

Belongs to the Ikaros C2H2-type zinc-finger protein family. In terms of assembly, probably self-associates.

Its subcellular location is the nucleus. In terms of biological role, transcriptional repressor that binds the core 5'GNNTGTNG-3' DNA consensus sequence. The protein is Zinc finger protein Pegasus (ikzf5) of Xenopus tropicalis (Western clawed frog).